Reading from the N-terminus, the 223-residue chain is MILDKLSIFGTDNIGIYIFTNDKYTIIPKIDDKEVIEKIQGILKTEIIQTTISKSVLVGILVTGNNDVILLPRTALADEIKVIKEQAKDVRVEVVDIRPTALGNIILSNTHGALIYQDLSEAEINKVKKALQIDTAIKGTIANIITVGSVAVITDKAGLVHIDATEEELKKLSELFKVKLDSGTVNFGSVFIRSGLVANRNGVLVGSSTTGAEILRIQRAFSD.

Belongs to the eIF-6 family.

Binds to the 50S ribosomal subunit and prevents its association with the 30S ribosomal subunit to form the 70S initiation complex. This Sulfolobus acidocaldarius (strain ATCC 33909 / DSM 639 / JCM 8929 / NBRC 15157 / NCIMB 11770) protein is Translation initiation factor 6.